Here is a 247-residue protein sequence, read N- to C-terminus: 2,3-bisphosphoglycerate-dependent phosphoglycerate mutase (247 aa).

Substrate-binding positions include 8 to 15, 21 to 22, Arg-60, 87 to 90, Lys-98, 114 to 115, and 183 to 184; these read RHGESQWN, TG, ERHY, RR, and GN. His-9 functions as the Tele-phosphohistidine intermediate in the catalytic mechanism. The Proton donor/acceptor role is filled by Glu-87.

It belongs to the phosphoglycerate mutase family. BPG-dependent PGAM subfamily.

It catalyses the reaction (2R)-2-phosphoglycerate = (2R)-3-phosphoglycerate. The protein operates within carbohydrate degradation; glycolysis; pyruvate from D-glyceraldehyde 3-phosphate: step 3/5. Catalyzes the interconversion of 2-phosphoglycerate and 3-phosphoglycerate. This Prosthecochloris aestuarii (strain DSM 271 / SK 413) protein is 2,3-bisphosphoglycerate-dependent phosphoglycerate mutase.